We begin with the raw amino-acid sequence, 93 residues long: uncharacterized protein (93 aa).

This is an uncharacterized protein from Treponema pallidum (strain Nichols).